Here is a 107-residue protein sequence, read N- to C-terminus: U-scoloptoxin(19)-Sm1a (107 aa).

Residues 1–20 (MRFLVSVAFLLTVSSLLVSG) form the signal peptide.

It belongs to the scoloptoxin-19 family. Post-translationally, contains 6 disulfide bonds. In terms of tissue distribution, expressed by the venom gland.

It localises to the secreted. In Scolopendra morsitans (Tanzanian blue ringleg centipede), this protein is U-scoloptoxin(19)-Sm1a.